The sequence spans 332 residues: Fructose-1,6-bisphosphatase class 1 (332 aa).

Residues Glu-94, Asp-116, Leu-118, and Asp-119 each coordinate Mg(2+). Residues Asp-119–Ser-122, Asn-211, Tyr-239, Tyr-257–Tyr-259, and Lys-269 contribute to the substrate site. Mg(2+) is bound at residue Glu-275.

The protein belongs to the FBPase class 1 family. Homotetramer. Mg(2+) serves as cofactor.

The protein resides in the cytoplasm. The enzyme catalyses beta-D-fructose 1,6-bisphosphate + H2O = beta-D-fructose 6-phosphate + phosphate. The protein operates within carbohydrate biosynthesis; Calvin cycle. This chain is Fructose-1,6-bisphosphatase class 1, found in Synechococcus sp. (strain JA-2-3B'a(2-13)) (Cyanobacteria bacterium Yellowstone B-Prime).